Consider the following 342-residue polypeptide: Phosphate acyltransferase (342 aa).

Belongs to the PlsX family. In terms of assembly, homodimer. Probably interacts with PlsY.

It localises to the cytoplasm. The catalysed reaction is a fatty acyl-[ACP] + phosphate = an acyl phosphate + holo-[ACP]. Its pathway is lipid metabolism; phospholipid metabolism. Catalyzes the reversible formation of acyl-phosphate (acyl-PO(4)) from acyl-[acyl-carrier-protein] (acyl-ACP). This enzyme utilizes acyl-ACP as fatty acyl donor, but not acyl-CoA. The protein is Phosphate acyltransferase of Shewanella halifaxensis (strain HAW-EB4).